The following is a 144-amino-acid chain: Peroxisome assembly protein 22 (144 aa).

Residues 13–35 (YGAVSLASLLVAASIVAYRWWNA) traverse the membrane as a helical segment.

It belongs to the peroxin-22 family.

Its subcellular location is the peroxisome membrane. Involved in peroxisome biogenesis. The sequence is that of Peroxisome assembly protein 22 (PEX22) from Eremothecium gossypii (strain ATCC 10895 / CBS 109.51 / FGSC 9923 / NRRL Y-1056) (Yeast).